A 569-amino-acid polypeptide reads, in one-letter code: MLO-like protein 10 (569 aa).

The Extracellular segment spans residues 1-41 (MATRCFWCWTTLLFCSQLLTGFARASSAGGAKEKGLSQTPT). The helical transmembrane segment at 42-62 (WAVALVCTFFILVSVLLEKAL) threads the bilayer. The Cytoplasmic segment spans residues 63-85 (HRVATWLWEKHKNSLLEALEKIK). The chain crosses the membrane as a helical span at residues 86–106 (AELMILGFISLLLTFGEQYIL). The Extracellular portion of the chain corresponds to 107–163 (KICIPEKAAASMLPCPAPSTHDQDKTHRRRLAAATTSSRCDEGHEPLIPATGLHQLH). A helical membrane pass occupies residues 164-184 (ILLFFMAAFHILYSFITMMLG). The Cytoplasmic portion of the chain corresponds to 185 to 286 (RLKIRGWKKW…IKRSLEDDFK (102 aa)). A helical membrane pass occupies residues 287–307 (VVVGISPLLWASFVIFLLLNV). Residue Asn308 is a topological domain, extracellular. A helical membrane pass occupies residues 309-329 (GWEALFWASILPVLIILAVST). Topologically, residues 330-372 (KLQAILTRMALGITERHAVVQGIPLVHGSDKYFWFNRPQLLLH) are cytoplasmic. The chain crosses the membrane as a helical span at residues 373–393 (LLHFALFQNAFQLTYFFWVWY). Residues 394 to 413 (SFGLKSCFHTDFKLVIVKLS) are Extracellular-facing. A helical membrane pass occupies residues 414-434 (LGVGALILCSYITLPLYALVT). At 435 to 569 (QMGSNMKKAV…VKNVPANDID (135 aa)) the chain is on the cytoplasmic side. Residues 447 to 468 (EQMAKALKKWHMTVKKKKGKAR) are calmodulin-binding.

Belongs to the MLO family.

It localises to the membrane. Functionally, may be involved in modulation of pathogen defense and leaf cell death. Activity seems to be regulated by Ca(2+)-dependent calmodulin binding and seems not to require heterotrimeric G proteins. This is MLO-like protein 10 (MLO10) from Arabidopsis thaliana (Mouse-ear cress).